Reading from the N-terminus, the 426-residue chain is MKRVVITGLGAVTPLGNGVKTNWRNLIQGKSGIVSLKGFPEYEQIPSKVAGVIPRGKEKEEWNVLDYVDQGKLREVATFTQLALTSAAEALKDARWIDIDEQEKLATGVCFGTGIGNLDDALNENGVLNKAGIRKVSPRVISKILINMPAGYISQRYGFTALNHTTTTACAAGCHAIGDAFNFIKLGHADVIIAGGSESCINPLTVAGFSKARSLSTKFNDNPKAASRPFDANRDGFVIGEGSAALVLEELEHAKNRNAHIYAEIVGYGLASDSYHITAPNPNGDAAYYAMKRSLKQAGLSASQLDYINAHATSTKLGDVAESIAITRLLCDVNRNPEAFPVSSSKGSIGHLLGAAGAIESVYTVLTVQKGVLPPTLNFEYSDIPQQFQCDYVPNVAKESRINVALSNSFGFGGTNASLCFKKFLQ.

The transit peptide at 1 to 18 (MKRVVITGLGAVTPLGNG) directs the protein to the mitochondrion. Positions 19–423 (VKTNWRNLIQ…GTNASLCFKK (405 aa)) constitute a Ketosynthase family 3 (KS3) domain. Catalysis depends on for beta-ketoacyl synthase activity residues cysteine 170, histidine 311, and histidine 351.

This sequence belongs to the thiolase-like superfamily. Beta-ketoacyl-ACP synthases family.

It is found in the mitochondrion. It carries out the reaction a fatty acyl-[ACP] + malonyl-[ACP] + H(+) = a 3-oxoacyl-[ACP] + holo-[ACP] + CO2. It catalyses the reaction butanoyl-[ACP] + malonyl-[ACP] + H(+) = 3-oxohexanoyl-[ACP] + holo-[ACP] + CO2. The catalysed reaction is hexanoyl-[ACP] + malonyl-[ACP] + H(+) = 3-oxooctanoyl-[ACP] + holo-[ACP] + CO2. The enzyme catalyses octanoyl-[ACP] + malonyl-[ACP] + H(+) = 3-oxodecanoyl-[ACP] + holo-[ACP] + CO2. It carries out the reaction decanoyl-[ACP] + malonyl-[ACP] + H(+) = 3-oxododecanoyl-[ACP] + holo-[ACP] + CO2. It catalyses the reaction dodecanoyl-[ACP] + malonyl-[ACP] + H(+) = 3-oxotetradecanoyl-[ACP] + holo-[ACP] + CO2. The catalysed reaction is tetradecanoyl-[ACP] + malonyl-[ACP] + H(+) = 3-oxohexadecanoyl-[ACP] + holo-[ACP] + CO2. The protein operates within lipid metabolism; fatty acid biosynthesis. Functionally, may play a role in the biosynthesis of lipoic acid as well as longer chain fatty acids required for optimal mitochondrial function. The chain is Putative 3-oxoacyl-[acyl-carrier-protein] synthase, mitochondrial from Schizosaccharomyces pombe (strain 972 / ATCC 24843) (Fission yeast).